The primary structure comprises 299 residues: 5-azacytidine resistance protein azr1 (299 aa).

The 259-residue stretch at 35–293 (KSHFPSPATL…DDTTITCLLI (259 aa)) folds into the PPM-type phosphatase domain.

Confers azacytidine resistance in high copy. This is 5-azacytidine resistance protein azr1 (azr1) from Schizosaccharomyces pombe (strain 972 / ATCC 24843) (Fission yeast).